Consider the following 106-residue polypeptide: Late cornified envelope protein 2A (106 aa).

Residues 1-10 show a composition bias toward low complexity; the sequence is MSCQQNQQQC. Positions 1–25 are disordered; the sequence is MSCQQNQQQCQPPPKCPPKCPPKCP. The span at 11-25 shows a compositional bias: pro residues; it reads QPPPKCPPKCPPKCP.

Belongs to the LCE family. As to quaternary structure, interacts with CYSRT1. In terms of tissue distribution, skin-specific. Expression was readily detected in adult trunk skin, adult arm skin, fetal skin, penal skin, vulva, esophagus and tongue. Not expressed in the cervix, rectum, lung, colon, or placenta.

Precursors of the cornified envelope of the stratum corneum. This is Late cornified envelope protein 2A (LCE2A) from Homo sapiens (Human).